The sequence spans 316 residues: Acetaldehyde dehydrogenase 3 (316 aa).

12–15 (SGNI) contacts NAD(+). The Acyl-thioester intermediate role is filled by C132. NAD(+)-binding positions include 163-171 (SAGPGTRAN) and N289.

Belongs to the acetaldehyde dehydrogenase family.

The enzyme catalyses acetaldehyde + NAD(+) + CoA = acetyl-CoA + NADH + H(+). The sequence is that of Acetaldehyde dehydrogenase 3 (mhpF) from Comamonas testosteroni (Pseudomonas testosteroni).